Here is a 345-residue protein sequence, read N- to C-terminus: Phosphoribosylformylglycinamidine cyclo-ligase (345 aa).

It belongs to the AIR synthase family.

It is found in the cytoplasm. It catalyses the reaction 2-formamido-N(1)-(5-O-phospho-beta-D-ribosyl)acetamidine + ATP = 5-amino-1-(5-phospho-beta-D-ribosyl)imidazole + ADP + phosphate + H(+). The protein operates within purine metabolism; IMP biosynthesis via de novo pathway; 5-amino-1-(5-phospho-D-ribosyl)imidazole from N(2)-formyl-N(1)-(5-phospho-D-ribosyl)glycinamide: step 2/2. In Shewanella putrefaciens (strain CN-32 / ATCC BAA-453), this protein is Phosphoribosylformylglycinamidine cyclo-ligase.